Consider the following 196-residue polypeptide: MALTFNRRNDRTESSEFEEKMLFVNRTSKTYQGGRRFRFAALVILGDRNGRVGMGIGKAKEVPVAIEKAKAVARKNMITVPVENGTIPHEIVGENSTSRVLLKPAGPGTGVIAGTVPRSIAELAGITNMLSKELGSRNKVNVAYAVFDGFKNLRTAKQVRNLRGTEVRPSLSSDSPAGRSATTEAGEGVADTGGMQ.

The 64-residue stretch at 17–80 (FEEKMLFVNR…AVARKNMITV (64 aa)) folds into the S5 DRBM domain. A disordered region spans residues 164-196 (GTEVRPSLSSDSPAGRSATTEAGEGVADTGGMQ). Residues 170-183 (SLSSDSPAGRSATT) are compositionally biased toward polar residues.

Belongs to the universal ribosomal protein uS5 family. In terms of assembly, part of the 30S ribosomal subunit. Contacts proteins S4 and S8.

In terms of biological role, with S4 and S12 plays an important role in translational accuracy. Its function is as follows. Located at the back of the 30S subunit body where it stabilizes the conformation of the head with respect to the body. This is Small ribosomal subunit protein uS5 from Deinococcus radiodurans (strain ATCC 13939 / DSM 20539 / JCM 16871 / CCUG 27074 / LMG 4051 / NBRC 15346 / NCIMB 9279 / VKM B-1422 / R1).